The primary structure comprises 378 residues: Transmembrane 6 superfamily member 2 (378 aa).

10 helical membrane-spanning segments follow: residues 10–30, 34–54, 63–83, 110–130, 140–160, 170–190, 219–239, 269–289, 291–311, and 332–352; these read TVAM…VSAF, LFVV…VYSL, PLYA…VIAL, IFIC…MAGA, LGLY…PGNI, PTFF…VRIF, LALI…GLVV, MLMY…ALAF, GCSW…QAQF, and TWAT…LLAF. EXPERA domains are found at residues 61–186 and 217–351; these read YDPL…CWAG and ADLA…HLLA.

The protein belongs to the TM6SF family. Highly expressed in the liver at both the mRNA and protein levels.

Its subcellular location is the endoplasmic reticulum membrane. The protein resides in the endoplasmic reticulum-Golgi intermediate compartment membrane. Its function is as follows. Regulator of liver fat metabolism influencing triglyceride secretion and hepatic lipid droplet content. May function as sterol isomerase. The protein is Transmembrane 6 superfamily member 2 (Tm6sf2) of Mus musculus (Mouse).